We begin with the raw amino-acid sequence, 178 residues long: CASP-like protein 2A2 (178 aa).

At 1 to 22 (MDKTDQTAIDESALVLNRTEKS) the chain is on the cytoplasmic side. A helical transmembrane segment spans residues 23–43 (AEAVLRVASMALSITGLVIMI). At 44–69 (KNSISNEFGSVSYSNIGAFMYLVSAN) the chain is on the extracellular side. Residues 70–90 (GVCAAYSLLSALAILALPCPI) traverse the membrane as a helical segment. The Cytoplasmic segment spans residues 91–96 (SKVQVR). A helical transmembrane segment spans residues 97-117 (TLFLLDQVVTYVVLAAGAVSA). Topologically, residues 118-145 (ETVYLAYYGNIPITWSSACDSYGSFCHN) are extracellular. The chain crosses the membrane as a helical span at residues 146-166 (ALISVVFTFVVSLLYMLLSLI). Over 167-178 (SSYRLFTRFEAP) the chain is Cytoplasmic.

It belongs to the Casparian strip membrane proteins (CASP) family. Homodimer and heterodimers. As to expression, mostly expressed in flowers and buds and, to a lower extent, in roots and yellow siliques. Localized in the floral organ abscission zone.

The protein localises to the cell membrane. Involved in floral organ shedding. The sequence is that of CASP-like protein 2A2 from Arabidopsis thaliana (Mouse-ear cress).